The sequence spans 317 residues: L-lactate dehydrogenase (317 aa).

NAD(+) contacts are provided by residues valine 17, aspartate 38, lysine 43, and 82 to 83; that span reads GA. Substrate is bound by residues glutamine 85, arginine 91, and 123–126; that span reads NPVD. Residues 121 to 123 and serine 146 each bind NAD(+); that span reads VAN. Residue 151 to 154 coordinates substrate; that stretch reads DSAR. Beta-D-fructose 1,6-bisphosphate is bound by residues arginine 156 and histidine 171. The Proton acceptor role is filled by histidine 178. Residue tyrosine 224 is modified to Phosphotyrosine. Threonine 233 lines the substrate pocket.

Belongs to the LDH/MDH superfamily. LDH family. As to quaternary structure, homotetramer.

The protein resides in the cytoplasm. The catalysed reaction is (S)-lactate + NAD(+) = pyruvate + NADH + H(+). It functions in the pathway fermentation; pyruvate fermentation to lactate; (S)-lactate from pyruvate: step 1/1. Allosterically activated by fructose 1,6-bisphosphate (FBP). In terms of biological role, catalyzes the conversion of lactate to pyruvate. This Moorella thermoacetica (strain ATCC 39073 / JCM 9320) protein is L-lactate dehydrogenase.